The sequence spans 654 residues: tRNA 5-methylaminomethyl-2-thiouridine biosynthesis bifunctional protein MnmC (654 aa).

The interval 1–235 (MSDFQHAQLD…KREMLGGTYQ (235 aa)) is tRNA (mnm(5)s(2)U34)-methyltransferase. The FAD-dependent cmnm(5)s(2)U34 oxidoreductase stretch occupies residues 261–654 (VGGGLAGCAS…LRDLVRGQRG (394 aa)).

In the N-terminal section; belongs to the methyltransferase superfamily. tRNA (mnm(5)s(2)U34)-methyltransferase family. This sequence in the C-terminal section; belongs to the DAO family. It depends on FAD as a cofactor.

It is found in the cytoplasm. The enzyme catalyses 5-aminomethyl-2-thiouridine(34) in tRNA + S-adenosyl-L-methionine = 5-methylaminomethyl-2-thiouridine(34) in tRNA + S-adenosyl-L-homocysteine + H(+). In terms of biological role, catalyzes the last two steps in the biosynthesis of 5-methylaminomethyl-2-thiouridine (mnm(5)s(2)U) at the wobble position (U34) in tRNA. Catalyzes the FAD-dependent demodification of cmnm(5)s(2)U34 to nm(5)s(2)U34, followed by the transfer of a methyl group from S-adenosyl-L-methionine to nm(5)s(2)U34, to form mnm(5)s(2)U34. The chain is tRNA 5-methylaminomethyl-2-thiouridine biosynthesis bifunctional protein MnmC from Pseudomonas aeruginosa (strain UCBPP-PA14).